The sequence spans 81 residues: Sulfur carrier protein TusA (81 aa).

C19 functions as the Cysteine persulfide intermediate in the catalytic mechanism.

It belongs to the sulfur carrier protein TusA family.

The protein localises to the cytoplasm. Sulfur carrier protein which probably makes part of a sulfur-relay system. This is Sulfur carrier protein TusA from Shewanella putrefaciens (strain CN-32 / ATCC BAA-453).